A 499-amino-acid chain; its full sequence is Probable cytosol aminopeptidase (499 aa).

Residues lysine 262 and aspartate 267 each contribute to the Mn(2+) site. Residue lysine 274 is part of the active site. Residues aspartate 285, aspartate 344, and glutamate 346 each contribute to the Mn(2+) site. Arginine 348 is an active-site residue.

This sequence belongs to the peptidase M17 family. The cofactor is Mn(2+).

The protein localises to the cytoplasm. It carries out the reaction Release of an N-terminal amino acid, Xaa-|-Yaa-, in which Xaa is preferably Leu, but may be other amino acids including Pro although not Arg or Lys, and Yaa may be Pro. Amino acid amides and methyl esters are also readily hydrolyzed, but rates on arylamides are exceedingly low.. The enzyme catalyses Release of an N-terminal amino acid, preferentially leucine, but not glutamic or aspartic acids.. Functionally, presumably involved in the processing and regular turnover of intracellular proteins. Catalyzes the removal of unsubstituted N-terminal amino acids from various peptides. The polypeptide is Probable cytosol aminopeptidase (Protochlamydia amoebophila (strain UWE25)).